A 67-amino-acid chain; its full sequence is Large ribosomal subunit protein uL29 (67 aa).

It belongs to the universal ribosomal protein uL29 family.

This chain is Large ribosomal subunit protein uL29, found in Clostridium acetobutylicum (strain ATCC 824 / DSM 792 / JCM 1419 / IAM 19013 / LMG 5710 / NBRC 13948 / NRRL B-527 / VKM B-1787 / 2291 / W).